The sequence spans 86 residues: MANIKQQKKRNKTNEKRRLQNFSFKSSVKTVVKQVKTAVANADKQKALALLSVAYKKFDKGVSKRVYHANFSARNKSDLQKLVNTL.

Residues 1–11 (MANIKQQKKRN) are compositionally biased toward basic residues. The tract at residues 1–20 (MANIKQQKKRNKTNEKRRLQ) is disordered.

Belongs to the bacterial ribosomal protein bS20 family.

Its function is as follows. Binds directly to 16S ribosomal RNA. The chain is Small ribosomal subunit protein bS20 from Aster yellows witches'-broom phytoplasma (strain AYWB).